A 270-amino-acid chain; its full sequence is Monofunctional glycosyltransferase (270 aa).

Polar residues predominate over residues 1–10 (MKRSQRMNNS). Positions 1–36 (MKRSQRMNNSPERHSQYRNEPHYNTYYQPVGKPPKK) are disordered. The segment covering 11–21 (PERHSQYRNEP) has biased composition (basic and acidic residues). Residues 42–62 (IFLRLFIIFVFIYALFIGLMY) form a helical membrane-spanning segment.

This sequence belongs to the glycosyltransferase 51 family.

The protein resides in the cell membrane. The enzyme catalyses [GlcNAc-(1-&gt;4)-Mur2Ac(oyl-L-Ala-gamma-D-Glu-L-Lys-D-Ala-D-Ala)](n)-di-trans,octa-cis-undecaprenyl diphosphate + beta-D-GlcNAc-(1-&gt;4)-Mur2Ac(oyl-L-Ala-gamma-D-Glu-L-Lys-D-Ala-D-Ala)-di-trans,octa-cis-undecaprenyl diphosphate = [GlcNAc-(1-&gt;4)-Mur2Ac(oyl-L-Ala-gamma-D-Glu-L-Lys-D-Ala-D-Ala)](n+1)-di-trans,octa-cis-undecaprenyl diphosphate + di-trans,octa-cis-undecaprenyl diphosphate + H(+). It participates in cell wall biogenesis; peptidoglycan biosynthesis. Peptidoglycan polymerase that catalyzes glycan chain elongation using lipid-linked disaccharide-pentapeptide as the substrate. This chain is Monofunctional glycosyltransferase, found in Staphylococcus haemolyticus (strain JCSC1435).